Consider the following 145-residue polypeptide: 3-hydroxyacyl-[acyl-carrier-protein] dehydratase FabZ (145 aa).

Histidine 48 is an active-site residue.

This sequence belongs to the thioester dehydratase family. FabZ subfamily.

Its subcellular location is the cytoplasm. It catalyses the reaction a (3R)-hydroxyacyl-[ACP] = a (2E)-enoyl-[ACP] + H2O. Functionally, involved in unsaturated fatty acids biosynthesis. Catalyzes the dehydration of short chain beta-hydroxyacyl-ACPs and long chain saturated and unsaturated beta-hydroxyacyl-ACPs. In Cellvibrio japonicus (strain Ueda107) (Pseudomonas fluorescens subsp. cellulosa), this protein is 3-hydroxyacyl-[acyl-carrier-protein] dehydratase FabZ.